We begin with the raw amino-acid sequence, 202 residues long: Recoverin (202 aa).

The N-myristoyl glycine moiety is linked to residue glycine 2. 4 consecutive EF-hand domains span residues 24–59 (TEEE…FFPE), 61–96 (DPKA…TSAG), 97–132 (KTNQ…IFKM), and 147–182 (TPEK…NKEI). The residue at position 39 (cysteine 39) is a Cysteine sulfenic acid (-SOH). Positions 74, 76, 78, 80, 85, 110, 112, 114, 116, and 121 each coordinate Ca(2+). The segment at 189 to 192 (EPQK) is interaction with GRK1. The interval 191–202 (QKVKEKLKEKKL) is modulates EF-hand 3 domain calcium binding affinity.

The protein belongs to the recoverin family. As to quaternary structure, homodimer; disulfide-linked. Homodimerization is caused by prolonged intense illumination. May form a complex composed of RHO, GRK1 and RCVRN in a Ca(2+)-dependent manner; RCVRN prevents the interaction between GRK1 and RHO. Interacts (via C-terminus) with GRK1 (via N-terminus); the interaction is Ca(2+)-dependent. In terms of processing, the N-terminal glycine is linked to one of four different types of acyl groups. The most abundant is myristoleate (14:1), but 14:0, 14:2, and 12:0 acyl residues are also present. The Ca(2+) induced exposure of the myristoyl group, known as the calcium-myristoyl switch, promotes RCVRN binding to the photoreceptor cell membranes only when intracellular Ca(2+) concentration is high. Post-translationally, oxidation on Cys-39 occurs in response to prolonged intense illumination and results in the formation of disulfide homodimers, and to a lesser extent disulfide-linked heterodimers. As to expression, expressed in the retina (at protein level). Expressed in the pineal gland (at protein level).

Its subcellular location is the photoreceptor inner segment. The protein localises to the cell projection. It is found in the cilium. The protein resides in the photoreceptor outer segment. It localises to the photoreceptor outer segment membrane. Its subcellular location is the perikaryon. In terms of biological role, acts as a calcium sensor and regulates phototransduction of cone and rod photoreceptor cells. Modulates light sensitivity of cone photoreceptor in dark and dim conditions. In response to high Ca(2+) levels induced by low light levels, prolongs RHO/rhodopsin activation in rod photoreceptor cells by binding to and inhibiting GRK1-mediated phosphorylation of RHO/rhodopsin. Plays a role in scotopic vision/enhances vision in dim light by enhancing signal transfer between rod photoreceptors and rod bipolar cells. Improves rod photoreceptor sensitivity in dim light and mediates response of rod photoreceptors to facilitate detection of change and motion in bright light. This Bos taurus (Bovine) protein is Recoverin (RCVRN).